A 392-amino-acid chain; its full sequence is Cyclic di-GMP phosphodiesterase RocR (392 aa).

The Response regulatory domain occupies N5 to N126. D56 is modified (4-aspartylphosphate). Positions E140–S392 constitute an EAL domain. E175, N233, E265, and D295 together coordinate Mg(2+). Catalysis depends on E352, which acts as the Proton acceptor.

Homotetramer. Exhibits a highly unusual tetrameric structure arranged around a single dyad, with the four subunits adopting two distinctly different conformations, with only two active sites accessible for substrate binding. Interacts with RocS1. Mg(2+) is required as a cofactor.

The enzyme catalyses 3',3'-c-di-GMP + H2O = 5'-phosphoguanylyl(3'-&gt;5')guanosine + H(+). With respect to regulation, phosphorylation of Asp-56 probably induces local conformational changes in the response regulatory domain. These structural changes are transmitted to the adjacent EAL domain, then the signal is further transmitted down to the active site. The phosphodiesterase activity is inhibited by Ca(2+) and Zn(2+). Phosphodiesterase activity is inhibited by a benzoisothiazolinone derivative that specifically inhibited RocR, but not some other phosphodiesterases. Phosphodiesterase (PDE) that catalyzes the hydrolysis of cyclic diguanylate (c-di-GMP) to 5'-pGpG. Cannot use cyclic AMP or cyclic GMP. Part of the RocSAR two-component regulatory signaling system (also known as the SadARS system), which regulates biofilm maturation, type III secretion and expression of the cup fimbrial-gene cluster. Negatively regulates the expression of cup genes by antagonizing the activity of RocA1. This is Cyclic di-GMP phosphodiesterase RocR from Pseudomonas aeruginosa (strain ATCC 15692 / DSM 22644 / CIP 104116 / JCM 14847 / LMG 12228 / 1C / PRS 101 / PAO1).